A 431-amino-acid polypeptide reads, in one-letter code: Adenylosuccinate synthetase (431 aa).

GTP contacts are provided by residues 12-18 (GDEGKGK) and 40-42 (GHT). Asp13 acts as the Proton acceptor in catalysis. 2 residues coordinate Mg(2+): Asp13 and Gly40. Residues 13 to 16 (DEGK), 38 to 41 (NAGH), Thr130, Arg144, Gln225, Thr240, and Arg304 each bind IMP. His41 serves as the catalytic Proton donor. 300–306 (ATTGRPR) contacts substrate. GTP-binding positions include Arg306, 332–334 (KLD), and 414–416 (SVG).

It belongs to the adenylosuccinate synthetase family. Homodimer. Mg(2+) is required as a cofactor.

The protein resides in the cytoplasm. The enzyme catalyses IMP + L-aspartate + GTP = N(6)-(1,2-dicarboxyethyl)-AMP + GDP + phosphate + 2 H(+). Its pathway is purine metabolism; AMP biosynthesis via de novo pathway; AMP from IMP: step 1/2. Plays an important role in the de novo pathway of purine nucleotide biosynthesis. Catalyzes the first committed step in the biosynthesis of AMP from IMP. The chain is Adenylosuccinate synthetase from Geotalea uraniireducens (strain Rf4) (Geobacter uraniireducens).